A 345-amino-acid polypeptide reads, in one-letter code: Phosphoribosylformylglycinamidine cyclo-ligase (345 aa).

The protein belongs to the AIR synthase family.

Its subcellular location is the cytoplasm. It catalyses the reaction 2-formamido-N(1)-(5-O-phospho-beta-D-ribosyl)acetamidine + ATP = 5-amino-1-(5-phospho-beta-D-ribosyl)imidazole + ADP + phosphate + H(+). Its pathway is purine metabolism; IMP biosynthesis via de novo pathway; 5-amino-1-(5-phospho-D-ribosyl)imidazole from N(2)-formyl-N(1)-(5-phospho-D-ribosyl)glycinamide: step 2/2. In Cronobacter sakazakii (strain ATCC BAA-894) (Enterobacter sakazakii), this protein is Phosphoribosylformylglycinamidine cyclo-ligase.